The following is a 267-amino-acid chain: 4-hydroxy-tetrahydrodipicolinate reductase (267 aa).

NAD(+) contacts are provided by residues 8-13 (GAAGRM) and glutamate 34. Residue arginine 35 participates in NADP(+) binding. NAD(+)-binding positions include 98-100 (GST) and 122-125 (APNM). Histidine 155 acts as the Proton donor/acceptor in catalysis. Histidine 156 is a (S)-2,3,4,5-tetrahydrodipicolinate binding site. Residue lysine 159 is the Proton donor of the active site. 165-166 (GT) provides a ligand contact to (S)-2,3,4,5-tetrahydrodipicolinate.

This sequence belongs to the DapB family.

Its subcellular location is the cytoplasm. It carries out the reaction (S)-2,3,4,5-tetrahydrodipicolinate + NAD(+) + H2O = (2S,4S)-4-hydroxy-2,3,4,5-tetrahydrodipicolinate + NADH + H(+). The enzyme catalyses (S)-2,3,4,5-tetrahydrodipicolinate + NADP(+) + H2O = (2S,4S)-4-hydroxy-2,3,4,5-tetrahydrodipicolinate + NADPH + H(+). Its pathway is amino-acid biosynthesis; L-lysine biosynthesis via DAP pathway; (S)-tetrahydrodipicolinate from L-aspartate: step 4/4. Catalyzes the conversion of 4-hydroxy-tetrahydrodipicolinate (HTPA) to tetrahydrodipicolinate. In Geobacter sp. (strain M21), this protein is 4-hydroxy-tetrahydrodipicolinate reductase.